The following is a 723-amino-acid chain: FACT complex subunit Ssrp1 (723 aa).

Phosphoserine is present on S443. Disordered stretches follow at residues 459 to 564 (EARE…AFML) and 586 to 723 (AKKG…EASD). 2 stretches are compositionally biased toward acidic residues: residues 464 to 478 (EEDDDDGDSDEESTD) and 486 to 507 (NESDVAEEYDSNVESDSDDDSD). Positions 531-557 (KKEKKHKEKERTKKPSKKKKDSGKPKR) are enriched in basic residues. Residues 555–621 (PKRATTAFML…RYHDEMRNYK (67 aa)) constitute a DNA-binding region (HMG box). Basic and acidic residues predominate over residues 586-621 (AKKGGEMWKELKDKSKWEDAAAKDKQRYHDEMRNYK). S628 is subject to Phosphoserine. Residues 644-656 (PSPSKKANTSGSG) show a composition bias toward polar residues. Phosphoserine occurs at positions 664 and 668. The segment covering 664–676 (SDDDSTSSDDEKD) has biased composition (acidic residues). T669 bears the Phosphothreonine mark. A phosphoserine mark is found at S670 and S671. Positions 677-692 (NEPAKKKSKPPSDGDA) are enriched in basic and acidic residues. A compositionally biased stretch (acidic residues) spans 702 to 723 (EPEESEEDSNASDEDEEDEASD).

Belongs to the SSRP1 family. Component of the FACT complex, a stable heterodimer of dre4/spt16 and Ssrp. Interacts with CHD1 and TRL/GAGA. In terms of tissue distribution, expressed at highest levels in nurse cells of the ovary.

Its subcellular location is the nucleus. The protein localises to the chromosome. It localises to the nucleolus. In terms of biological role, component of the FACT complex, a general chromatin factor that acts to reorganize nucleosomes. The FACT complex is involved in multiple processes that require DNA as a template such as mRNA elongation, DNA replication and DNA repair. During transcription elongation the FACT complex acts as a histone chaperone that both destabilizes and restores nucleosomal structure. It facilitates the passage of RNA polymerase II and transcription by promoting the dissociation of one histone H2A-H2B dimer from the nucleosome, then subsequently promotes the reestablishment of the nucleosome following the passage of RNA polymerase II. Binds specifically to single-stranded DNA and RNA with highest affinity for nucleotides G and U. The FACT complex is required for expression of Hox genes. This chain is FACT complex subunit Ssrp1 (Ssrp), found in Drosophila melanogaster (Fruit fly).